We begin with the raw amino-acid sequence, 121 residues long: Large ribosomal subunit protein uL14 (121 aa).

It belongs to the universal ribosomal protein uL14 family. As to quaternary structure, part of the 50S ribosomal subunit. Forms a cluster with proteins L3 and L19. In the 70S ribosome, L14 and L19 interact and together make contacts with the 16S rRNA in bridges B5 and B8.

Functionally, binds to 23S rRNA. Forms part of two intersubunit bridges in the 70S ribosome. The sequence is that of Large ribosomal subunit protein uL14 from Synechococcus elongatus (strain ATCC 33912 / PCC 7942 / FACHB-805) (Anacystis nidulans R2).